Consider the following 394-residue polypeptide: Elongation factor Tu 1 (394 aa).

The 195-residue stretch at 10–204 (KPHVNVGTIG…ALDSYIPQPE (195 aa)) folds into the tr-type G domain. The segment at 19–26 (GHVDHGKT) is G1. 19–26 (GHVDHGKT) serves as a coordination point for GTP. Residue Thr26 participates in Mg(2+) binding. Positions 60 to 64 (GITIN) are G2. A G3 region spans residues 81–84 (DCPG). GTP-binding positions include 81–85 (DCPGH) and 136–139 (NKCD). The segment at 136–139 (NKCD) is G4. A G5 region spans residues 174-176 (SAL).

It belongs to the TRAFAC class translation factor GTPase superfamily. Classic translation factor GTPase family. EF-Tu/EF-1A subfamily. Monomer.

It is found in the cytoplasm. The catalysed reaction is GTP + H2O = GDP + phosphate + H(+). In terms of biological role, GTP hydrolase that promotes the GTP-dependent binding of aminoacyl-tRNA to the A-site of ribosomes during protein biosynthesis. The polypeptide is Elongation factor Tu 1 (Yersinia pestis bv. Antiqua (strain Nepal516)).